We begin with the raw amino-acid sequence, 287 residues long: Polyamine aminopropyltransferase (287 aa).

The 234-residue stretch at 5-238 (ETWHETLHDH…GIMTFAWASQ (234 aa)) folds into the PABS domain. An S-methyl-5'-thioadenosine-binding site is contributed by Q33. Spermidine contacts are provided by H64 and D88. S-methyl-5'-thioadenosine-binding positions include E108 and 140 to 141 (DG). Catalysis depends on D158, which acts as the Proton acceptor. 158–161 (DCTD) is a spermidine binding site. Residue P165 participates in S-methyl-5'-thioadenosine binding.

Belongs to the spermidine/spermine synthase family. As to quaternary structure, homodimer or homotetramer.

It is found in the cytoplasm. It carries out the reaction S-adenosyl 3-(methylsulfanyl)propylamine + putrescine = S-methyl-5'-thioadenosine + spermidine + H(+). The protein operates within amine and polyamine biosynthesis; spermidine biosynthesis; spermidine from putrescine: step 1/1. In terms of biological role, catalyzes the irreversible transfer of a propylamine group from the amino donor S-adenosylmethioninamine (decarboxy-AdoMet) to putrescine (1,4-diaminobutane) to yield spermidine. The protein is Polyamine aminopropyltransferase of Sodalis glossinidius (strain morsitans).